Here is a 354-residue protein sequence, read N- to C-terminus: Fructose-bisphosphate aldolase (354 aa).

A D-glyceraldehyde 3-phosphate-binding site is contributed by Ser-50. Asp-83 (proton donor) is an active-site residue. Residues His-84, Asp-105, Glu-142, and His-198 each contribute to the Zn(2+) site. Gly-199 is a binding site for dihydroxyacetone phosphate. Position 232 (His-232) interacts with Zn(2+). Residues 233–235 (GSS) and 275–278 (NIDT) each bind dihydroxyacetone phosphate.

The protein belongs to the class II fructose-bisphosphate aldolase family. Zn(2+) serves as cofactor.

The enzyme catalyses beta-D-fructose 1,6-bisphosphate = D-glyceraldehyde 3-phosphate + dihydroxyacetone phosphate. Its pathway is carbohydrate degradation; glycolysis; D-glyceraldehyde 3-phosphate and glycerone phosphate from D-glucose: step 4/4. Catalyzes the aldol condensation of dihydroxyacetone phosphate (DHAP or glycerone-phosphate) with glyceraldehyde 3-phosphate (G3P) to form fructose 1,6-bisphosphate (FBP) in gluconeogenesis and the reverse reaction in glycolysis. This is Fructose-bisphosphate aldolase (fba) from Stutzerimonas stutzeri (Pseudomonas stutzeri).